The chain runs to 492 residues: Cysteine--tRNA ligase (492 aa).

A Zn(2+)-binding site is contributed by Cys-29. A 'HIGH' region motif is present at residues 31-41; the sequence is LTTSDPPHLGH. Positions 229, 254, and 258 each coordinate Zn(2+). Positions 286-290 match the 'KMSKS' region motif; that stretch reads KMSSS.

This sequence belongs to the class-I aminoacyl-tRNA synthetase family. Zn(2+) serves as cofactor.

The protein localises to the cytoplasm. The enzyme catalyses tRNA(Cys) + L-cysteine + ATP = L-cysteinyl-tRNA(Cys) + AMP + diphosphate. The chain is Cysteine--tRNA ligase from Haloarcula marismortui (strain ATCC 43049 / DSM 3752 / JCM 8966 / VKM B-1809) (Halobacterium marismortui).